The following is a 117-amino-acid chain: Large ribosomal subunit protein bL20c (117 aa).

This sequence belongs to the bacterial ribosomal protein bL20 family.

It localises to the plastid. The protein localises to the chloroplast. Its function is as follows. Binds directly to 23S ribosomal RNA and is necessary for the in vitro assembly process of the 50S ribosomal subunit. It is not involved in the protein synthesizing functions of that subunit. This is Large ribosomal subunit protein bL20c from Draba nemorosa (Woodland whitlowgrass).